The primary structure comprises 788 residues: Protein HHLF1 (788 aa).

3 disordered regions span residues 1-82 (MAQR…NFWH), 366-385 (TGTAAGTTSPPAASGTETEA), and 609-663 (IHKK…SRLP). Gly residues predominate over residues 16 to 25 (RGRGAGGPSG). Residues 26-56 (VGSSPPSSCVPMGAPSTAGTGASAAATTTPG) are compositionally biased toward low complexity. The interval 74–248 (SGNNSNFWHG…HGAGEVVRLY (175 aa)) is RNA-binding. Residues 650 to 659 (LRRDDEDWKP) are compositionally biased toward basic and acidic residues. An interaction with host EIF2AK2/PKR region spans residues 671-788 (LDETFWVLGS…IATHYHYNAQ (118 aa)).

This sequence belongs to the herpesviridae US22 family. Interacts with host EIF2AK2/PKR; this interaction retains EIF2AK2 to the host nucleus and prevents its activation. Interaction (via N-terminus) with host BECN1; this interaction inhibits host autophagy. Interacts with the viral DNA polymerase accessory subunit UL44. Interacts with host HSPA5.

The protein localises to the virion. Its subcellular location is the host cytoplasm. The protein resides in the host nucleus. In terms of biological role, inhibits the establishment of the antiviral state and the integrated stress response (ISR) in the infected cell. Prevents the phosphorylation of the host eukaryotic translation initiation factor eIF-2alpha/EIF2S1 and thus the shutoff of viral and cellular protein synthesis by directly interacting with EIF2AK2/PKR. Prevents stress granule formation in response to eIF-2alpha/EIF2S1 phosphorylation, thereby rescuing viral replication and protein synthesis. Also inhibits host autophagy by interacting with host Beclin-1/BECN1. This is Protein HHLF1 (TRS1) from Homo sapiens (Human).